The primary structure comprises 578 residues: Arginine--tRNA ligase (578 aa).

The short motif at 127 to 137 is the 'HIGH' region element; that stretch reads PNLAKEMHVGH.

It belongs to the class-I aminoacyl-tRNA synthetase family. As to quaternary structure, monomer.

It localises to the cytoplasm. It catalyses the reaction tRNA(Arg) + L-arginine + ATP = L-arginyl-tRNA(Arg) + AMP + diphosphate. The protein is Arginine--tRNA ligase of Pseudomonas putida (strain GB-1).